Reading from the N-terminus, the 350-residue chain is Protein-glutamate methylesterase/protein-glutamine glutaminase (350 aa).

Positions 5 to 122 (RVLSVDDSAL…REGMLAYSEM (118 aa)) constitute a Response regulatory domain. The residue at position 56 (Asp-56) is a 4-aspartylphosphate. Positions 152-338 (LLSSEKLLVI…DLSQVVSQQM (187 aa)) constitute a CheB-type methylesterase domain. Catalysis depends on residues Ser-164, His-190, and Asp-286.

Belongs to the CheB family. Post-translationally, phosphorylated by CheA. Phosphorylation of the N-terminal regulatory domain activates the methylesterase activity.

The protein resides in the cytoplasm. The enzyme catalyses [protein]-L-glutamate 5-O-methyl ester + H2O = L-glutamyl-[protein] + methanol + H(+). It carries out the reaction L-glutaminyl-[protein] + H2O = L-glutamyl-[protein] + NH4(+). In terms of biological role, involved in chemotaxis. Part of a chemotaxis signal transduction system that modulates chemotaxis in response to various stimuli. Catalyzes the demethylation of specific methylglutamate residues introduced into the chemoreceptors (methyl-accepting chemotaxis proteins or MCP) by CheR. Also mediates the irreversible deamidation of specific glutamine residues to glutamic acid. The polypeptide is Protein-glutamate methylesterase/protein-glutamine glutaminase (Enterobacter cloacae).